A 609-amino-acid chain; its full sequence is 1-deoxy-D-xylulose-5-phosphate synthase (609 aa).

Thiamine diphosphate contacts are provided by residues His77 and 118 to 120 (GHS). Asp149 contacts Mg(2+). Residues 150–151 (GA), Asn178, Tyr259, and Glu342 contribute to the thiamine diphosphate site. Asn178 serves as a coordination point for Mg(2+).

Belongs to the transketolase family. DXPS subfamily. In terms of assembly, homodimer. The cofactor is Mg(2+). Thiamine diphosphate serves as cofactor.

The enzyme catalyses D-glyceraldehyde 3-phosphate + pyruvate + H(+) = 1-deoxy-D-xylulose 5-phosphate + CO2. Its pathway is metabolic intermediate biosynthesis; 1-deoxy-D-xylulose 5-phosphate biosynthesis; 1-deoxy-D-xylulose 5-phosphate from D-glyceraldehyde 3-phosphate and pyruvate: step 1/1. Catalyzes the acyloin condensation reaction between C atoms 2 and 3 of pyruvate and glyceraldehyde 3-phosphate to yield 1-deoxy-D-xylulose-5-phosphate (DXP). This chain is 1-deoxy-D-xylulose-5-phosphate synthase, found in Listeria monocytogenes serotype 4b (strain CLIP80459).